The primary structure comprises 356 residues: Protein pelota homolog (356 aa).

It belongs to the eukaryotic release factor 1 family. Pelota subfamily. As to quaternary structure, monomer. Requires a divalent metal cation as cofactor.

It localises to the cytoplasm. May function in recognizing stalled ribosomes, interact with stem-loop structures in stalled mRNA molecules, and effect endonucleolytic cleavage of the mRNA. May play a role in the release non-functional ribosomes and degradation of damaged mRNAs. Has endoribonuclease activity. This is Protein pelota homolog from Pyrococcus furiosus (strain ATCC 43587 / DSM 3638 / JCM 8422 / Vc1).